Reading from the N-terminus, the 385-residue chain is Transcription factor-like protein DPB (385 aa).

Disordered stretches follow at residues Met-1–Ile-53 and Asp-71–Arg-102. Positions Pro-22–Val-31 are enriched in polar residues. The span at Ser-32–Ile-53 shows a compositional bias: low complexity. Residues Gly-101–Pro-184 mediate DNA binding. The short motif at Asp-150–Pro-184 is the DEF box element. The stretch at Arg-185–Ser-234 forms a coiled coil. Positions Pro-296–Asn-385 are disordered. Over residues Pro-300–Thr-327 the composition is skewed to polar residues. The span at His-336–Gln-349 shows a compositional bias: low complexity. Positions Glu-355 to Asp-364 are enriched in polar residues.

This sequence belongs to the E2F/DP family. Heterodimer with non-phosphorylated E2FC. No interaction with phosphorylated E2FC. Interacts preferentially with E2FC, but also with E2FA and E2FB. Interacts with SKP2A. Targeted for proteasomal degradation by the SCF(SKP2A) E3 ubiquitin ligase complex. Phosphorylated. In terms of tissue distribution, ubiquitous.

The protein resides in the nucleus. It localises to the cytoplasm. Functionally, involved in the regulation of the G1/S transition. Increases the DNA binding activity of E2F proteins after heterodimerization. The complex DPB/E2FC restricts cell division and lateral root initiation and may function as a negative regulator of E2F-regulated genes. The interaction with SKP2A is controlled by auxin. The sequence is that of Transcription factor-like protein DPB (DPB) from Arabidopsis thaliana (Mouse-ear cress).